Reading from the N-terminus, the 173-residue chain is Transcription factor E (173 aa).

In terms of domain architecture, HTH TFE/IIEalpha-type spans 3-88 (NNPIIQQVLL…TWRATFTKLP (86 aa)).

Belongs to the TFE family. As to quaternary structure, monomer. Interaction with RNA polymerase subunits RpoF and RpoE is necessary for Tfe stimulatory transcription activity. Able to interact with Tbp and RNA polymerase in the absence of DNA promoter. Interacts both with the preinitiation and elongation complexes.

In terms of biological role, transcription factor that plays a role in the activation of archaeal genes transcribed by RNA polymerase. Facilitates transcription initiation by enhancing TATA-box recognition by TATA-box-binding protein (Tbp), and transcription factor B (Tfb) and RNA polymerase recruitment. Not absolutely required for transcription in vitro, but particularly important in cases where Tbp or Tfb function is not optimal. It dynamically alters the nucleic acid-binding properties of RNA polymerases by stabilizing the initiation complex and destabilizing elongation complexes. Seems to translocate with the RNA polymerase following initiation and acts by binding to the non template strand of the transcription bubble in elongation complexes. The polypeptide is Transcription factor E (Methanococcus aeolicus (strain ATCC BAA-1280 / DSM 17508 / OCM 812 / Nankai-3)).